The primary structure comprises 365 residues: WAT1-related protein At1g01070 (365 aa).

Helical transmembrane passes span 14–34 (YSPVIVMVMSNVAMGSVNALV), 46–66 (VIGAYRMAISALILVPFAYVL), 83–103 (FVSGLLGASLMQFFFLLGLSY), 107–127 (TVSCALVSMLPAITFALALIF), 139–159 (AGMLKVIGTLICISGALFLTF), 189–209 (WLLGCLYLTIGTVLLSLWMLF), 221–241 (YSSTCLMSIFAAFQCALLSLY), 255–275 (FVITVIIYAGVVGQAMTTVAT), 285–305 (VFASAFFPLTLISATLFDFLI), and 310–330 (LYLGSVIGSLVTITGLYMFLW). Residues 27-157 (MGSVNALVKK…LICISGALFL (131 aa)) enclose the EamA 1 domain. Residues 223–329 (STCLMSIFAA…VTITGLYMFL (107 aa)) form the EamA 2 domain. Over residues 340-356 (TALSSGMDNEAQYTTPN) the composition is skewed to polar residues. A disordered region spans residues 340 to 365 (TALSSGMDNEAQYTTPNKDNDSKSPV).

Belongs to the drug/metabolite transporter (DMT) superfamily. Plant drug/metabolite exporter (P-DME) (TC 2.A.7.4) family.

Its subcellular location is the membrane. This Arabidopsis thaliana (Mouse-ear cress) protein is WAT1-related protein At1g01070.